We begin with the raw amino-acid sequence, 194 residues long: dTTP/UTP pyrophosphatase (194 aa).

Residue Asp69 is the Proton acceptor of the active site.

Belongs to the Maf family. YhdE subfamily. The cofactor is a divalent metal cation.

The protein localises to the cytoplasm. It catalyses the reaction dTTP + H2O = dTMP + diphosphate + H(+). The enzyme catalyses UTP + H2O = UMP + diphosphate + H(+). Functionally, nucleoside triphosphate pyrophosphatase that hydrolyzes dTTP and UTP. May have a dual role in cell division arrest and in preventing the incorporation of modified nucleotides into cellular nucleic acids. This chain is dTTP/UTP pyrophosphatase, found in Symbiobacterium thermophilum (strain DSM 24528 / JCM 14929 / IAM 14863 / T).